Consider the following 422-residue polypeptide: Glutamyl-tRNA reductase (422 aa).

Substrate is bound by residues 49–52 (TCNR), Ser-107, 112–114 (EPQ), and Gln-118. The active-site Nucleophile is the Cys-50. Residue 187 to 192 (GAGETI) participates in NADP(+) binding.

This sequence belongs to the glutamyl-tRNA reductase family. As to quaternary structure, homodimer.

It carries out the reaction (S)-4-amino-5-oxopentanoate + tRNA(Glu) + NADP(+) = L-glutamyl-tRNA(Glu) + NADPH + H(+). It functions in the pathway porphyrin-containing compound metabolism; protoporphyrin-IX biosynthesis; 5-aminolevulinate from L-glutamyl-tRNA(Glu): step 1/2. Functionally, catalyzes the NADPH-dependent reduction of glutamyl-tRNA(Glu) to glutamate 1-semialdehyde (GSA). This Pseudomonas aeruginosa (strain ATCC 15692 / DSM 22644 / CIP 104116 / JCM 14847 / LMG 12228 / 1C / PRS 101 / PAO1) protein is Glutamyl-tRNA reductase.